We begin with the raw amino-acid sequence, 90 residues long: Small ribosomal subunit protein uS15 (90 aa).

This sequence belongs to the universal ribosomal protein uS15 family. Part of the 30S ribosomal subunit. Forms a bridge to the 50S subunit in the 70S ribosome, contacting the 23S rRNA.

Its function is as follows. One of the primary rRNA binding proteins, it binds directly to 16S rRNA where it helps nucleate assembly of the platform of the 30S subunit by binding and bridging several RNA helices of the 16S rRNA. Functionally, forms an intersubunit bridge (bridge B4) with the 23S rRNA of the 50S subunit in the ribosome. This Aquifex aeolicus (strain VF5) protein is Small ribosomal subunit protein uS15.